A 37-amino-acid polypeptide reads, in one-letter code: GDPTFCGETCRVIPVCTYSAALGCTCDDRSDGLCKRN.

The cyclopeptide (Gly-Asn) cross-link spans 1 to 37 (GDPTFCGETCRVIPVCTYSAALGCTCDDRSDGLCKRN). 3 disulfides stabilise this stretch: Cys-6–Cys-24, Cys-10–Cys-26, and Cys-16–Cys-34.

The protein belongs to the cyclotide family. In terms of processing, this is a cyclic peptide.

Probably participates in a plant defense mechanism. Inhibits the cytopathic effects of the human immunodeficiency virus. The polypeptide is Palicourein (Palicourea condensata (Cappel)).